We begin with the raw amino-acid sequence, 382 residues long: U11/U12 small nuclear ribonucleoprotein 59 kDa protein (382 aa).

The stretch at 31–63 (NTKNITDQLKQLQDTLNLAKSMEKELEALKMIK) forms a coiled coil. A disordered region spans residues 274-297 (SEENTTLTTSNKTNNDTDKDSNTN). A compositionally biased stretch (low complexity) spans 277–287 (NTTLTTSNKTN).

In terms of assembly, component of the U11/U12 snRNPs that are part of the U12-type spliceosome.

The protein resides in the nucleus. The polypeptide is U11/U12 small nuclear ribonucleoprotein 59 kDa protein (SNRNP59) (Arabidopsis thaliana (Mouse-ear cress)).